A 549-amino-acid chain; its full sequence is Exodeoxyribonuclease 7 large subunit (549 aa).

Residues 511–549 (LVATDPPVDPKPTRKPVQKSSSPKPSSRKPKKSQQEDLF) form a disordered region.

It belongs to the XseA family. As to quaternary structure, heterooligomer composed of large and small subunits.

It is found in the cytoplasm. The catalysed reaction is Exonucleolytic cleavage in either 5'- to 3'- or 3'- to 5'-direction to yield nucleoside 5'-phosphates.. Bidirectionally degrades single-stranded DNA into large acid-insoluble oligonucleotides, which are then degraded further into small acid-soluble oligonucleotides. This is Exodeoxyribonuclease 7 large subunit from Beijerinckia indica subsp. indica (strain ATCC 9039 / DSM 1715 / NCIMB 8712).